Consider the following 220-residue polypeptide: Phosphatidylserine decarboxylase proenzyme (220 aa).

Serine 188 acts as the Schiff-base intermediate with substrate; via pyruvic acid in catalysis. At serine 188 the chain carries Pyruvic acid (Ser); by autocatalysis.

It belongs to the phosphatidylserine decarboxylase family. PSD-A subfamily. As to quaternary structure, heterodimer of a large membrane-associated beta subunit and a small pyruvoyl-containing alpha subunit. Pyruvate serves as cofactor. Post-translationally, is synthesized initially as an inactive proenzyme. Formation of the active enzyme involves a self-maturation process in which the active site pyruvoyl group is generated from an internal serine residue via an autocatalytic post-translational modification. Two non-identical subunits are generated from the proenzyme in this reaction, and the pyruvate is formed at the N-terminus of the alpha chain, which is derived from the carboxyl end of the proenzyme. The post-translation cleavage follows an unusual pathway, termed non-hydrolytic serinolysis, in which the side chain hydroxyl group of the serine supplies its oxygen atom to form the C-terminus of the beta chain, while the remainder of the serine residue undergoes an oxidative deamination to produce ammonia and the pyruvoyl prosthetic group on the alpha chain.

It localises to the cell membrane. It catalyses the reaction a 1,2-diacyl-sn-glycero-3-phospho-L-serine + H(+) = a 1,2-diacyl-sn-glycero-3-phosphoethanolamine + CO2. It functions in the pathway phospholipid metabolism; phosphatidylethanolamine biosynthesis; phosphatidylethanolamine from CDP-diacylglycerol: step 2/2. In terms of biological role, catalyzes the formation of phosphatidylethanolamine (PtdEtn) from phosphatidylserine (PtdSer). In Parabacteroides distasonis (strain ATCC 8503 / DSM 20701 / CIP 104284 / JCM 5825 / NCTC 11152), this protein is Phosphatidylserine decarboxylase proenzyme.